The following is a 163-amino-acid chain: Troponin C (163 aa).

Ser-1 carries the post-translational modification N-acetylserine. 4 consecutive EF-hand domains span residues Glu-14–Ser-49, Ile-50–Asp-85, Ile-90–Asp-125, and Leu-127–Arg-162. Lys-20 carries the post-translational modification N6,N6-dimethyllysine; alternate. Position 20 is an N6-methyllysine; alternate (Lys-20). Residues Asp-27, Asp-29, Asp-33, Glu-38, Asp-63, Asp-65, Ser-67, Thr-69, Glu-74, Asp-103, Asn-105, Asp-107, and Glu-114 each contribute to the Ca(2+) site.

This sequence belongs to the troponin C family.

Troponin is the central regulatory protein of striated muscle contraction. Tn consists of three components: Tn-I which is the inhibitor of actomyosin ATPase, Tn-T which contains the binding site for tropomyosin and Tn-C. The binding of calcium to Tn-C abolishes the inhibitory action of Tn on actin filaments. The chain is Troponin C from Branchiostoma lanceolatum (Common lancelet).